Consider the following 68-residue polypeptide: Probable Sec-independent protein translocase protein TatE (68 aa).

Residues M1 to G21 traverse the membrane as a helical segment. Residues M43–E68 form a disordered region.

Belongs to the TatA/E family. TatE subfamily.

It localises to the cell inner membrane. Part of the twin-arginine translocation (Tat) system that transports large folded proteins containing a characteristic twin-arginine motif in their signal peptide across membranes. TatE shares overlapping functions with TatA. This is Probable Sec-independent protein translocase protein TatE from Klebsiella pneumoniae subsp. pneumoniae (strain ATCC 700721 / MGH 78578).